Here is a 265-residue protein sequence, read N- to C-terminus: ClpXP adapter protein SpxH (265 aa).

It belongs to the SpxH family. In terms of assembly, interacts with Spx.

It is found in the cytoplasm. Adapter protein required for efficient degradation of Spx by ClpXP under non-stress conditions. Interaction with Spx stabilizes Spx and exposes the C-terminus of Spx for recognition and proteolysis by ClpXP. The polypeptide is ClpXP adapter protein SpxH (Staphylococcus haemolyticus (strain JCSC1435)).